We begin with the raw amino-acid sequence, 230 residues long: UPF0173 metal-dependent hydrolase RSKD131_0588 (230 aa).

This sequence belongs to the UPF0173 family.

This Cereibacter sphaeroides (strain KD131 / KCTC 12085) (Rhodobacter sphaeroides) protein is UPF0173 metal-dependent hydrolase RSKD131_0588.